A 590-amino-acid chain; its full sequence is Aspartate--tRNA(Asp/Asn) ligase (590 aa).

Residue glutamate 175 coordinates L-aspartate. The segment at 199 to 202 is aspartate; it reads QQYK. Residues arginine 221 and histidine 450 each contribute to the L-aspartate site. 221–223 is an ATP binding site; that stretch reads RDE. Glutamate 484 is an ATP binding site. Arginine 491 contacts L-aspartate. 536-539 is an ATP binding site; it reads GIDR.

This sequence belongs to the class-II aminoacyl-tRNA synthetase family. Type 1 subfamily. Homodimer.

It is found in the cytoplasm. It catalyses the reaction tRNA(Asx) + L-aspartate + ATP = L-aspartyl-tRNA(Asx) + AMP + diphosphate. Its function is as follows. Aspartyl-tRNA synthetase with relaxed tRNA specificity since it is able to aspartylate not only its cognate tRNA(Asp) but also tRNA(Asn). Reaction proceeds in two steps: L-aspartate is first activated by ATP to form Asp-AMP and then transferred to the acceptor end of tRNA(Asp/Asn). This chain is Aspartate--tRNA(Asp/Asn) ligase, found in Azorhizobium caulinodans (strain ATCC 43989 / DSM 5975 / JCM 20966 / LMG 6465 / NBRC 14845 / NCIMB 13405 / ORS 571).